The sequence spans 387 residues: MLQRIYLDNNATTRIDPKVKEIMDPFLRDHYGNPSSLHQFGTETHPAIAEALDKLYKGINARDIDDVIITSCATESNNWVLKGVYFDECLKKGKNHIITTVAEHPAVRSTCNFLESLGVEVTYLPINEHGSITADQVKEAITEKTALVSVMWANNETGLIFPIEEIGAICKEKGVLFHTDAVQAIGKIPVDVLKANVDFLSFSAHKFHGPKGIGGLYIRSGVGLTPLFHGGEHMNGRRSGTLNVPYIVGMGEAMKLAVEHLDYEKEVVGKLRDKLEEALLKIPDVMVVGDRVHRVPNTTLISVRGIEGEAMLWDLNRSNIAASTGSACASEDLEANPVMVAIGASKELAHTAIRLSLSRFNTEAEIDKTIEVFSQAAVRLRNISSSY.

Residues 73–74, Asn155, Gln183, and 203–205 each bind pyridoxal 5'-phosphate; these read AT and SAH. Lys206 carries the post-translational modification N6-(pyridoxal phosphate)lysine. Thr241 serves as a coordination point for pyridoxal 5'-phosphate. The active-site Cysteine persulfide intermediate is Cys328. Cys328 contacts [2Fe-2S] cluster.

This sequence belongs to the class-V pyridoxal-phosphate-dependent aminotransferase family. NifS/IscS subfamily. In terms of assembly, homodimer. Forms a heterotetramer with IscU, interacts with other sulfur acceptors. Requires pyridoxal 5'-phosphate as cofactor.

The protein resides in the cytoplasm. The enzyme catalyses (sulfur carrier)-H + L-cysteine = (sulfur carrier)-SH + L-alanine. Its pathway is cofactor biosynthesis; iron-sulfur cluster biosynthesis. Functionally, master enzyme that delivers sulfur to a number of partners involved in Fe-S cluster assembly, tRNA modification or cofactor biosynthesis. Catalyzes the removal of elemental sulfur atoms from cysteine to produce alanine. Functions as a sulfur delivery protein for Fe-S cluster synthesis onto IscU, an Fe-S scaffold assembly protein, as well as other S acceptor proteins. This Helicobacter pylori (strain J99 / ATCC 700824) (Campylobacter pylori J99) protein is Cysteine desulfurase IscS.